Consider the following 498-residue polypeptide: Cobyric acid synthase (498 aa).

In terms of domain architecture, GATase cobBQ-type spans 257 to 447 (DLEIAVLRLP…LHGLLDNGPW (191 aa)). Cys338 (nucleophile) is an active-site residue. His439 is a catalytic residue.

The protein belongs to the CobB/CobQ family. CobQ subfamily.

It functions in the pathway cofactor biosynthesis; adenosylcobalamin biosynthesis. Functionally, catalyzes amidations at positions B, D, E, and G on adenosylcobyrinic A,C-diamide. NH(2) groups are provided by glutamine, and one molecule of ATP is hydrogenolyzed for each amidation. This Synechococcus sp. (strain CC9605) protein is Cobyric acid synthase.